Reading from the N-terminus, the 466-residue chain is Zinc finger and SCAN domain-containing protein 26 (466 aa).

K21 participates in a covalent cross-link: Glycyl lysine isopeptide (Lys-Gly) (interchain with G-Cter in SUMO2). An SCAN box domain is found at 42–124 (CKQFRQLRYE…GILEDLQLDR (83 aa)). Basic and acidic residues-rich tracts occupy residues 124-135 (RGKAGEQKDSAQ) and 163-173 (KPEERGKETRS). A disordered region spans residues 124-182 (RGKAGEQKDSAQRSRPTVLVGEPAPRREAREQPGCALPQKPEERGKETRSENGNLIAGT). A C2H2-type 1; degenerate zinc finger spans residues 220-242 (SQCLETKERLVQNSGLIEHDRAH). 7 consecutive C2H2-type zinc fingers follow at residues 270 to 292 (HPCQECGKVFQRSSHLIRHQKIH), 298 to 320 (YQCKECGKVFSQNAGLLEHLRIH), 326 to 348 (YLCIHCGKNFRRSSHLNRHQKIH), 354 to 376 (RECKECGKTFSRALLLTHHQRVH), 382 to 404 (HHCNECGKAFSLTSDLIRHHRIH), 410 to 432 (FKCNVCQKAFRLNSHLDQHVRIH), and 438 to 460 (YKCSECNEAFRQKSGLFQHQRHH).

Its subcellular location is the nucleus. Functionally, may be involved in transcriptional regulation. This is Zinc finger and SCAN domain-containing protein 26 (Zscan26) from Mus musculus (Mouse).